Here is a 278-residue protein sequence, read N- to C-terminus: Nucleotide-binding protein Tmel_1373 (278 aa).

10-17 (GLSGAGKS) contacts ATP. Residue 58–61 (DSRS) coordinates GTP.

It belongs to the RapZ-like family.

In terms of biological role, displays ATPase and GTPase activities. The protein is Nucleotide-binding protein Tmel_1373 of Thermosipho melanesiensis (strain DSM 12029 / CIP 104789 / BI429).